The chain runs to 289 residues: Nitrogenase iron protein (289 aa).

8-15 is an ATP binding site; the sequence is GKGGIGKS. Cysteine 96 contacts [4Fe-4S] cluster. Residue arginine 99 is modified to ADP-ribosylarginine; by dinitrogenase reductase ADP-ribosyltransferase. Residue cysteine 130 coordinates [4Fe-4S] cluster.

The protein belongs to the NifH/BchL/ChlL family. Homodimer. It depends on [4Fe-4S] cluster as a cofactor. In terms of processing, the reversible ADP-ribosylation of Arg-99 inactivates the nitrogenase reductase and regulates nitrogenase activity.

The enzyme catalyses N2 + 8 reduced [2Fe-2S]-[ferredoxin] + 16 ATP + 16 H2O = H2 + 8 oxidized [2Fe-2S]-[ferredoxin] + 2 NH4(+) + 16 ADP + 16 phosphate + 6 H(+). In terms of biological role, the key enzymatic reactions in nitrogen fixation are catalyzed by the nitrogenase complex, which has 2 components: the iron protein and the molybdenum-iron protein. This Parafrankia sp. (strain EAN1pec) protein is Nitrogenase iron protein.